We begin with the raw amino-acid sequence, 314 residues long: Dihydroorotate dehydrogenase (fumarate) (314 aa).

Substrate-binding positions include lysine 46, 70–74, and asparagine 130; that span reads NSMGL. Lysine 46 is covalently cross-linked (Glycyl lysine isopeptide (Lys-Gly) (interchain with G-Cter in ubiquitin)). 46–47 contributes to the FMN binding site; that stretch reads KS. Asparagine 130 lines the FMN pocket. The Nucleophile role is filled by cysteine 133. FMN is bound by residues lysine 167 and isoleucine 195. 196-197 contacts substrate; that stretch reads NS. FMN-binding positions include glycine 224, 252-253, and 274-275; these read GG and GT.

Belongs to the dihydroorotate dehydrogenase family. Type 1 subfamily. In terms of assembly, homodimer. It depends on FMN as a cofactor.

Its subcellular location is the cytoplasm. It catalyses the reaction (S)-dihydroorotate + fumarate = orotate + succinate. Its pathway is pyrimidine metabolism; UMP biosynthesis via de novo pathway. With respect to regulation, the activity is independent of the presence of oxygen. Its function is as follows. Catalyzes the conversion of dihydroorotate to orotate with fumarate as the electron acceptor. Molecular oxygen can replace fumarate in vitro. Does not use oxaloacetate or NAD or NADP as electron acceptors. This Saccharomyces cerevisiae (strain ATCC 204508 / S288c) (Baker's yeast) protein is Dihydroorotate dehydrogenase (fumarate) (URA1).